A 1058-amino-acid chain; its full sequence is MPKRTDIQKIMVIGSGPIIIGQAAEFDYAGTQACLSLKEEGYEVVLVNSNPATIMTDKEIADKVYIEPITLEFVTRILRKERPDALLPTLGGQTGLNMAMELSKNGILDELGVELLGTKLSAIDQAEDRDLFKQLMEELEQPIPESEIVNTVEEAVAFAATIGYPVIVRPAFTLGGTGGGMCANEKELREITENGLKLSPVTQCLIERSIAGFKEIEYEVMRDSADNALVVCNMENFDPVGIHTGDSIVFAPAQTMSDYENQMLRDASLSIIRALKIEGGCNVQLALDPNSFKYYVIEVNPRVSRSSALASKATGYPIAKLAAKIAVGLTLDEVINPVTGSTYAMFEPALDYVVAKIPRFPFDKFEKGERRLGTQMKATGEVMAIGRNIEESLLKACRSLEIGVHHNEIPELAAVSDDALIEKVVKAQDDRLFYVSEAIRRGYTPEEIAELTKIDIFYLDKLLHIFEIEQELGAHPQDLEVLKTAKLNGFSDRKIAELWGTTDDQVRQLRLENKIVPVYKMVDTCAAEFDSETPYFYSTYGWENESIRSDKESVLVLGSGPIRIGQGVEFDYATVHSVKAIQAAGYEAIIMNSNPETVSTDFSVSDKLYFEPLTFEDVMNVIDLEQPKGVIVQFGGQTAINLAEPLAKAGVTILGTQVADLDRAEDRDLFEQALKELDIPQPPGQTATNEEEAALAARKIGFPVLVRPSYVLGGRAMEIVENEEDLRSYMRTAVKASPDHPVLVDSYIVGQECEVDAISDGKDVLIPGIMEHIERAGVHSGDSMAVYPPQTLSQKVQETIADYTKRLAIGLHCLGMMNIQFVIKDEKVYVIEVNPRASRTVPFLSKVTNIPMAQVATKLILGQSLSELGYQNGLYPESTRVHIKAPVFSFTKLAKVDSLLGPEMKSTGEVMGSDATLEKALYKAFEASYLHLPTFGNVVFTIADDAKEEALNLARRFQNIGYGILATEGTAAFFASHGLQAQPVGKIGDDDKDIPSFVRKGRIQAIINTVGTKRTADEDGEQIRRSAIEHGVPLFTALDTANAMLKVLESRSFVTEAI.

A carboxyphosphate synthetic domain region spans residues 1–401 (MPKRTDIQKI…SLLKACRSLE (401 aa)). ATP-binding residues include Arg-129, Arg-169, Gly-175, Gly-176, Arg-208, Ile-210, Glu-215, Gly-241, Ile-242, His-243, Gln-284, and Glu-298. Residues 133-327 (KQLMEELEQP…IAKLAAKIAV (195 aa)) enclose the ATP-grasp 1 domain. 3 residues coordinate Mg(2+): Gln-284, Glu-298, and Asn-300. Residues Gln-284, Glu-298, and Asn-300 each contribute to the Mn(2+) site. An oligomerization domain region spans residues 402-546 (IGVHHNEIPE…YSTYGWENES (145 aa)). Positions 547-929 (IRSDKESVLV…ALYKAFEASY (383 aa)) are carbamoyl phosphate synthetic domain. One can recognise an ATP-grasp 2 domain in the interval 671-861 (EQALKELDIP…MAQVATKLIL (191 aa)). Positions 707, 746, 748, 752, 777, 778, 779, 780, 820, and 832 each coordinate ATP. Positions 820, 832, and 834 each coordinate Mg(2+). Residues Gln-820, Glu-832, and Asn-834 each contribute to the Mn(2+) site. In terms of domain architecture, MGS-like spans 930–1058 (LHLPTFGNVV…ESRSFVTEAI (129 aa)). The tract at residues 930-1058 (LHLPTFGNVV…ESRSFVTEAI (129 aa)) is allosteric domain.

Belongs to the CarB family. Composed of two chains; the small (or glutamine) chain promotes the hydrolysis of glutamine to ammonia, which is used by the large (or ammonia) chain to synthesize carbamoyl phosphate. Tetramer of heterodimers (alpha,beta)4. The cofactor is Mg(2+). Mn(2+) is required as a cofactor.

The enzyme catalyses hydrogencarbonate + L-glutamine + 2 ATP + H2O = carbamoyl phosphate + L-glutamate + 2 ADP + phosphate + 2 H(+). It carries out the reaction hydrogencarbonate + NH4(+) + 2 ATP = carbamoyl phosphate + 2 ADP + phosphate + 2 H(+). It functions in the pathway amino-acid biosynthesis; L-arginine biosynthesis; carbamoyl phosphate from bicarbonate: step 1/1. Its pathway is pyrimidine metabolism; UMP biosynthesis via de novo pathway; (S)-dihydroorotate from bicarbonate: step 1/3. Large subunit of the glutamine-dependent carbamoyl phosphate synthetase (CPSase). CPSase catalyzes the formation of carbamoyl phosphate from the ammonia moiety of glutamine, carbonate, and phosphate donated by ATP, constituting the first step of 2 biosynthetic pathways, one leading to arginine and/or urea and the other to pyrimidine nucleotides. The large subunit (synthetase) binds the substrates ammonia (free or transferred from glutamine from the small subunit), hydrogencarbonate and ATP and carries out an ATP-coupled ligase reaction, activating hydrogencarbonate by forming carboxy phosphate which reacts with ammonia to form carbamoyl phosphate. This Streptococcus pneumoniae (strain JJA) protein is Carbamoyl phosphate synthase large chain.